Consider the following 300-residue polypeptide: Ribonuclease Z (300 aa).

Residues histidine 63, histidine 65, aspartate 67, histidine 68, histidine 140, aspartate 207, and histidine 265 each contribute to the Zn(2+) site. The active-site Proton acceptor is aspartate 67.

This sequence belongs to the RNase Z family. As to quaternary structure, homodimer. Zn(2+) serves as cofactor.

It catalyses the reaction Endonucleolytic cleavage of RNA, removing extra 3' nucleotides from tRNA precursor, generating 3' termini of tRNAs. A 3'-hydroxy group is left at the tRNA terminus and a 5'-phosphoryl group is left at the trailer molecule.. Functionally, zinc phosphodiesterase, which displays some tRNA 3'-processing endonuclease activity. Probably involved in tRNA maturation, by removing a 3'-trailer from precursor tRNA. The protein is Ribonuclease Z of Ignicoccus hospitalis (strain KIN4/I / DSM 18386 / JCM 14125).